Consider the following 121-residue polypeptide: Large ribosomal subunit protein bL12 (121 aa).

This sequence belongs to the bacterial ribosomal protein bL12 family. Homodimer. Part of the ribosomal stalk of the 50S ribosomal subunit. Forms a multimeric L10(L12)X complex, where L10 forms an elongated spine to which 2 to 4 L12 dimers bind in a sequential fashion. Binds GTP-bound translation factors.

In terms of biological role, forms part of the ribosomal stalk which helps the ribosome interact with GTP-bound translation factors. Is thus essential for accurate translation. The chain is Large ribosomal subunit protein bL12 from Acinetobacter baylyi (strain ATCC 33305 / BD413 / ADP1).